We begin with the raw amino-acid sequence, 462 residues long: MDMSSMAGSIGVSVAVLRFLLCFVATIPVSFACRIVPSRLGKHLYAAASGAFLSYLSFGFSSNLHFLVPMTIGYASMAIYRPKCGIITFFLGFAYLIGCHVFYMSGDAWKEGGIDSTGALMVLTLKVISCSMNYNDGMLKEEGLREAQKKNRLIQMPSLIEYFGYCLCCGSHFAGPVYEMKDYLEWTEGKGIWDTTEKRKKPSPYGATIRAILQAAICMALYLYLVPQYPLTRFTEPVYQEWGFLRKFSYQYMAGFTARWKYYFIWSISEASIIISGLGFSGWTDDASPKPKWDRAKNVDILGVELAKSAVQIPLVWNIQVSTWLRHYVYERLVQNGKKAGFFQLLATQTVSAVWHGLYPGYMMFFVQSALMIAGSRVIYRWQQAISPKMAMLRNIMVFINFLYTVLVLNYSAVGFMVLSLHETLTAYGSVYYIGTIIPVGLILLSYVVPAKPSRPKPRKEE.

The next 9 helical transmembrane spans lie at 9-29 (SIGVSVAVLRFLLCFVATIPV), 52-72 (FLSYLSFGFSSNLHFLVPMTI), 84-104 (CGIITFFLGFAYLIGCHVFYM), 158-178 (SLIEYFGYCLCCGSHFAGPVY), 211-231 (AILQAAICMALYLYLVPQYPL), 263-283 (YFIWSISEASIIISGLGFSGW), 353-373 (AVWHGLYPGYMMFFVQSALMI), 396-416 (IMVFINFLYTVLVLNYSAVGF), and 431-451 (VYYIGTIIPVGLILLSYVVPA). Residue H356 is part of the active site.

It belongs to the membrane-bound acyltransferase family. As to expression, expressed in roots, rosette leaves, petals, stigma, chalazal endosperm of developing seeds and vascular bundles of siliques.

The protein resides in the endoplasmic reticulum membrane. It catalyses the reaction a 1-acyl-sn-glycero-3-phosphocholine + an acyl-CoA = a 1,2-diacyl-sn-glycero-3-phosphocholine + CoA. It carries out the reaction 1-(9Z-octadecenoyl)-sn-glycero-3-phosphocholine + (9Z)-octadecenoyl-CoA = 1,2-di-(9Z-octadecenoyl)-sn-glycero-3-phosphocholine + CoA. The catalysed reaction is 1-(9Z-octadecenoyl)-sn-glycero-3-phosphocholine + (9Z,12Z)-octadecadienoyl-CoA = 1-(9Z)-octadecenoyl-2-(9Z,12Z)-octadecadienoyl-sn-glycero-3-phosphocholine + CoA. The enzyme catalyses (9Z,12Z,15Z)-octadecatrienoyl-CoA + 1-(9Z-octadecenoyl)-sn-glycero-3-phosphocholine = 1-(9Z-octadecaenoyl)-2-(9Z,12Z,15Z-octadecatrienoyl)-sn-glycero-3-phosphocholine + CoA. It catalyses the reaction a 1-acyl-sn-glycero-3-phosphoethanolamine + an acyl-CoA = a 1,2-diacyl-sn-glycero-3-phosphoethanolamine + CoA. It carries out the reaction a 1-acyl-sn-glycero-3-phospho-L-serine + an acyl-CoA = a 1,2-diacyl-sn-glycero-3-phospho-L-serine + CoA. Lysophospholipid acyltransferase with broad specificity. Mediates the conversion of lysophosphatidylethanolamine (1-acyl-sn-glycero-3-phosphoethanolamine or LPE) into phosphatidylethanolamine (1,2-diacyl-sn-glycero-3-phosphoethanolamine or PE) (LPEAT activity). Catalyzes the acylation of lysophosphatidylserine (1-acyl-2-hydroxy-sn-glycero-3-phospho-L-serine or LPS) into phosphatidylserine (1,2-diacyl-sn-glycero-3-phospho-L-serine or PS) (LPSAT activity). Can convert lysophosphatidylcholine (1-acyl-sn-glycero-3-phosphocholine or LPC) into phosphatidylcholine (1,2-diacyl-sn-glycero-3-phosphocholine or PC) (LPCAT activity). Exhibits preference for C18-unsaturated acyl-CoA when transferring an acyl group to lysophosphatidylcholine. Can also utilize lysophosphatidylglycerol (LPG) as substrate in vitro. Has neither activity towards lysophosphatidic acid (LPA) nor lysophosphatidylinositol (LPI). Lysophospholipid acyltransferases catalyze the reacylation step of the phospholipid remodeling pathway also known as the Lands cycle. The primary function of the Lands cycle is to provide a route for acyl remodeling to modify fatty acid (FA) composition of phospholipids derived from the Kennedy pathway. Is involved in PC acyl editing and phosphocholine headgroup exchange between PC and diacylglycerols. This processes control the majority of acyl fluxes through PC to provide polyunsaturated fatty acids for triacylglycerols synthesis in seeds. Involved with LPCAT2 in the direct incorporation of newly synthesized fatty acids exported form the chloroplast into PC through acyl editing. This chain is Lysophospholipid acyltransferase 1, found in Arabidopsis thaliana (Mouse-ear cress).